A 154-amino-acid chain; its full sequence is NADPH-dependent 7-cyano-7-deazaguanine reductase (154 aa).

The span at 1-21 (MPNTDVSSLSMLGQQTETAQS) shows a compositional bias: polar residues. The disordered stretch occupies residues 1–28 (MPNTDVSSLSMLGQQTETAQSPEEAVLE). The Thioimide intermediate role is filled by Cys-52. The active-site Proton donor is the Asp-59. Substrate is bound by residues 74-76 (VES) and 93-94 (HE).

This sequence belongs to the GTP cyclohydrolase I family. QueF type 1 subfamily.

The protein localises to the cytoplasm. It carries out the reaction 7-aminomethyl-7-carbaguanine + 2 NADP(+) = 7-cyano-7-deazaguanine + 2 NADPH + 3 H(+). It functions in the pathway tRNA modification; tRNA-queuosine biosynthesis. In terms of biological role, catalyzes the NADPH-dependent reduction of 7-cyano-7-deazaguanine (preQ0) to 7-aminomethyl-7-deazaguanine (preQ1). This Rhizobium johnstonii (strain DSM 114642 / LMG 32736 / 3841) (Rhizobium leguminosarum bv. viciae) protein is NADPH-dependent 7-cyano-7-deazaguanine reductase.